Here is a 128-residue protein sequence, read N- to C-terminus: Holo-[acyl-carrier-protein] synthase (128 aa).

Mg(2+)-binding residues include Asp8 and Glu60.

The protein belongs to the P-Pant transferase superfamily. AcpS family. Mg(2+) serves as cofactor.

The protein resides in the cytoplasm. The catalysed reaction is apo-[ACP] + CoA = holo-[ACP] + adenosine 3',5'-bisphosphate + H(+). In terms of biological role, transfers the 4'-phosphopantetheine moiety from coenzyme A to a Ser of acyl-carrier-protein. The protein is Holo-[acyl-carrier-protein] synthase of Anaeromyxobacter sp. (strain K).